Reading from the N-terminus, the 278-residue chain is Dehydrogenase/reductase SDR family member 4 (278 aa).

36 to 60 is an NADP(+) binding site; sequence LVTASTDGIGFAIARRLAQDGAHVV. Lysine 92 bears the N6-acetyllysine; alternate mark. Lysine 92 bears the N6-succinyllysine; alternate mark. Lysine 105 carries the N6-acetyllysine modification. Isoleucine 140 bears the Phosphoserine mark. Substrate is bound at residue serine 169. Tyrosine 182 acts as the Proton acceptor in catalysis. Lysine 186 lines the NADP(+) pocket. Lysine 216 is modified (N6-acetyllysine; alternate). Lysine 216 carries the N6-succinyllysine; alternate modification. At serine 220 the chain carries Phosphoserine. Residues lysine 227 and lysine 234 each carry the N6-succinyllysine modification. A Peroxisomal targeting signal motif is present at residues 276–278; sequence SRL.

This sequence belongs to the short-chain dehydrogenases/reductases (SDR) family. As to quaternary structure, homotetramer. In terms of tissue distribution, predominantly expressed in normal cervix (at protein level). Expressed in some neoplastic cervical tissues, but not in normal cervix (at protein level). As to expression, expressed in a few neoplastic cervical tissues. In terms of tissue distribution, high expression in liver.

The protein resides in the peroxisome. It is found in the nucleus. It catalyses the reaction a secondary alcohol + NADP(+) = a ketone + NADPH + H(+). The catalysed reaction is 3beta-hydroxy-5beta-pregnane-20-one + NADP(+) = 5beta-pregnan-3,20-dione + NADPH + H(+). The enzyme catalyses 5beta-dihydrotestosterone + NADPH + H(+) = 5beta-androstane-3beta,17beta-diol + NADP(+). It carries out the reaction 5beta-androstane-3,17-dione + NADPH + H(+) = 3beta-hydroxy-5beta-androstane-17-one + NADP(+). It catalyses the reaction isatin + NADPH + H(+) = 3-hydroxyindolin-2-one + NADP(+). The catalysed reaction is lithocholate + NADP(+) = 3-oxo-5beta-cholan-24-oate + NADPH + H(+). The enzyme catalyses 3-oxo-5beta-cholan-24-oate + NADPH + H(+) = isolithocholate + NADP(+). Its activity is regulated as follows. Inhibited by flavonoids (quercetin and genistein), cetylpyridium chloride, phenylhexane and valproic acid. Low inhibition is observed with fatty acids (myristic acid and lauric acid). No significant inhibition is observed with barbital, dicumarol, indomethacin, metyrapone, ethacrynic acid, disulfiram, hexestrol and benzodiazepines (diazepam and nitrazepam). Functionally, NADPH-dependent oxidoreductase which catalyzes the reduction of a variety of compounds bearing carbonyl groups including ketosteroids, alpha-dicarbonyl compounds, aldehydes, aromatic ketones and quinones. Reduces 3-ketosteroids and benzil into 3beta-hydroxysteroids and R-benzoin, respectively, in contrast to the stereoselectivity of non-primate DHRS4s which produce 3alpha-hydroxysteroids and S-benzoin. Diplays low activity toward all-trans-retinal and no activity toward 9-cis-retinal as compared to non-primate mammals. In the reverse reaction, catalyze the NAD-dependent oxidation of 3beta-hydroxysteroids and alcohol, but with much lower efficiency. Involved in the metabolism of 3beta-hydroxysteroids, isatin and xenobiotic carbonyl compounds. Its function is as follows. No detected catalytic activity in vitro, possibly due to the lack of catalytic site. In terms of biological role, NADPH-dependent oxidoreductase which catalyzes the reduction of a variety of compounds bearing carbonyl groups including ketosteroids, alpha-dicarbonyl compounds, aldehydes, aromatic ketones and quinones. Involved in the metabolism of 3beta-hydroxysteroids, isatin and xenobiotic carbonyl compounds. Has a higher catalytic activity for xenobiotic alpha-dicarbonyl compounds, sucha as benzil, than isoform 1 and is involved in benzil detoxification. The protein is Dehydrogenase/reductase SDR family member 4 of Homo sapiens (Human).